The sequence spans 125 residues: Fluoride-specific ion channel FluC (125 aa).

4 helical membrane-spanning segments follow: residues 6 to 26 (VLVM…GLGI), 35 to 55 (FLFG…GLFA), 66 to 86 (LLLL…ALSI), and 100 to 120 (AMGY…AGYL). Na(+)-binding residues include Gly-76 and Thr-79.

Belongs to the fluoride channel Fluc/FEX (TC 1.A.43) family.

It is found in the cell inner membrane. It catalyses the reaction fluoride(in) = fluoride(out). Its activity is regulated as follows. Na(+) is not transported, but it plays an essential structural role and its presence is essential for fluoride channel function. Its function is as follows. Fluoride-specific ion channel. Important for reducing fluoride concentration in the cell, thus reducing its toxicity. The sequence is that of Fluoride-specific ion channel FluC from Gloeobacter violaceus (strain ATCC 29082 / PCC 7421).